Here is a 349-residue protein sequence, read N- to C-terminus: Ferredoxin--NADP reductase 1 (349 aa).

Residues glutamate 36, lysine 44, tyrosine 48, isoleucine 88, leucine 123, aspartate 290, and serine 331 each coordinate FAD.

It belongs to the ferredoxin--NADP reductase type 2 family. In terms of assembly, homodimer. Requires FAD as cofactor.

It catalyses the reaction 2 reduced [2Fe-2S]-[ferredoxin] + NADP(+) + H(+) = 2 oxidized [2Fe-2S]-[ferredoxin] + NADPH. This is Ferredoxin--NADP reductase 1 from Bacillus thuringiensis (strain Al Hakam).